A 163-amino-acid polypeptide reads, in one-letter code: Transcription elongation factor GreB (163 aa).

Belongs to the GreA/GreB family. GreB subfamily.

Its function is as follows. Necessary for efficient RNA polymerase transcription elongation past template-encoded arresting sites. The arresting sites in DNA have the property of trapping a certain fraction of elongating RNA polymerases that pass through, resulting in locked ternary complexes. Cleavage of the nascent transcript by cleavage factors such as GreA or GreB allows the resumption of elongation from the new 3'terminus. GreB releases sequences of up to 9 nucleotides in length. The protein is Transcription elongation factor GreB of Vibrio parahaemolyticus serotype O3:K6 (strain RIMD 2210633).